Reading from the N-terminus, the 548-residue chain is MTRPLETPPDIEVPVLIVGGSMVGLSTALFLSHYGIQAMAVERHERTAIHPRAGHFHLRTLELLRSVGLEEVVARTSAEAFFPNGGINAVQSLAGGETASFISNLNAGVEEFSPTRRLFIAQQALEPILRSRAEELGADLRYSTEVVSVVDDGEGVTTVIRDKASGQERTVRSRYLVASDGWRSQRRAQLGIETRGQGLLSRSATIYFRADCRELLAGTHLGVIYVLNERLRGFFRFEKSLQSGFLGVATLGDPTRPGALDVSAGFTTDTAVELVRAAIGVPDIDVEIQDVAHWEATAALADRYRGGRIFLAGDAAHVVPPYGGFGGNTGVQDAHNLASKLALVLDGTAGEALLDTYEAERRPVGALTVDQAFSRYIRRLAPEFLDEQTPELVDDFSMELGYRYHSPAVLTEDDDKAVDQAVVGHPREALGRPGSRAPHVALRVDDHDRSVLDLLGRDFVVLAGPAGQVWAEAAERASKELGLPLSAYVVGSDTPVADVEGRFADAYGLSDAGVALVRPDGFIAWRSRDLAEDPEAALTDALRAVLCR.

This sequence belongs to the PheA/TfdB FAD monooxygenase family. Monomer. The cofactor is FAD.

It catalyses the reaction 4-methyl-5-nitrocatechol + NADPH + O2 = 2-hydroxy-5-methylquinone + nitrite + NADP(+) + H2O + H(+). The enzyme catalyses 4-methyl-5-nitrocatechol + NADH + O2 = 2-hydroxy-5-methylquinone + nitrite + NAD(+) + H2O + H(+). Its activity is regulated as follows. Activated by magnesium or manganese ions. Inhibited by concentrations of 4-methyl-5-nitrocatechol (MNC) above 2 mM. In terms of biological role, involved in the degradation of 2,4-dinitrotoluene (2,4-DNT). Catalyzes the removal of the nitro group from 4-methyl-5-nitrocatechol (MNC) to yield 2-hydroxy-5-methylquinone. It can use both NADH and NADPH as electron donors, but prefers NADPH. Also able to use 4-nitrocatechol as substrate. In Burkholderia sp, this protein is 4-methyl-5-nitrocatechol 5-monooxygenase.